Consider the following 525-residue polypeptide: MVARPEPEVEAMDAELAVPPPGCSHLGSFKVDNWKQNLRAIYQCFVWSGTAEARKRKAKSCVCHVCGIHLNRLHSCLYCVFFGCFTKKHIHDHAKSKRHNLAIDLMYGGIYCFLCQDYIYDKDIEIIAKEEQRKAWKMQGVGEKFSTWEPTKRELELLKHNPKRRKITSNCTIGLRGLINLGNTCFMNCIVQALTHTPLLRDFFLSDRHRCEMQSPSSCLVCEMSSLFQEFYSGHRSPHIPYKLLHLVWTHARHLAGYEQQDAHEFLIAALDVLHRHCKGDDNGKKANNPNHCNCIIDQIFTGGLQSDVTCQVCHGVSTTIDPFWDISLDLPGSSTPFWPLSPGSEGSVVNGESHASGTTTLTDCLRRFTRPEHLGSSAKIKCSGCHSYQESTKQLTMKKLPIVACFHLKRFEHSAKLRRKITTYVSFPLELDMTPFMASSKESRMNGQYQQPLDSLNNDNKYSLFAVVNHQGTLESGHYTSFIRQHKDQWFKCDDAIITKASIKDVLDSEGYLLFYHKQFLEYE.

Residues 21–138 (PGCSHLGSFK…KEEQRKAWKM (118 aa)) form a UBP-type zinc finger. 12 residues coordinate Zn(2+): C23, H25, C63, C66, C76, C79, C84, H89, H93, H99, C112, and C115. An N6-acetyllysine modification is found at K129. T147 carries the post-translational modification Phosphothreonine. Residues 176-520 (RGLINLGNTC…EGYLLFYHKQ (345 aa)) form the USP domain. Catalysis depends on C185, which acts as the Nucleophile. A Phosphoserine modification is found at S237. H479 acts as the Proton acceptor in catalysis.

The protein belongs to the peptidase C19 family. UBP8 subfamily. As to quaternary structure, component of some SAGA transcription coactivator-HAT complexes, at least composed of ATXN7, ATXN7L3, ENY2, GCN5L2, SUPT3H, TAF10, TRRAP and USP22. Within the SAGA complex, ATXN7L3, ENY2 and USP22 form a subcomplex required for histone deubiquitination. Interacts directly with ATXN7L3; leading to its recruitment to the SAGA complex. Interacts with ATXN7L3 and weakly with ATXN7L3B. Interacts with MED1. Phosphorylated in G2/M phase, but not in G1 phase by CDK1. Post-translationally, ubiquitinated and subsequently degraded in a CDC20-dependent manner. In terms of tissue distribution, highly expressed in brain and weakly in other organs.

It is found in the nucleus. The protein localises to the cytoplasm. It catalyses the reaction Thiol-dependent hydrolysis of ester, thioester, amide, peptide and isopeptide bonds formed by the C-terminal Gly of ubiquitin (a 76-residue protein attached to proteins as an intracellular targeting signal).. Functionally, deubiquitinase that plays a role in several cellular processes including transcriptional regulation, cell cycle progression or innate immunity. As part of the transcription regulatory histone acetylation (HAT) complex SAGA, catalyzes the deubiquitination of both histones H2A and H2B, thereby acting as a transcriptional coactivator. Recruited to specific gene promoters by activators such as MYC, where it is required for transcription. Facilitates cell-cycle progression by stabilizing CCNB1 and antagonizing its proteasome-mediated degradation in a cell cycle-specific manner. Modulates cell cycle progression and apoptosis also by antagonizing TP53 transcriptional activation through deacetylase SIRT1 stabilization. Plays multiple roles in immunity and inflammation. Participates in antiviral response by deubiquitinating the importin KPNA2, leading to IRF3 nuclear translocation and subsequent type I interferon production. Acts as a central regulator of type III IFN signaling by negatively regulating STING1 activation and ubiquitination. Inhibits NLRP3 inflammasome activation by promoting NLRP3 degradation through ATG5-dependent autophagy. Deubiquitinates CD274 to induce its stabilization and thereby participates in maintenance of immune tolerance to self. Controls necroptotic cell death by regulating RIPK3 phosphorylation and ubiquitination. During bacterial infection, promotes pro-inflammatory response by targeting TRAF6 and removing its 'Lys-48'-linked polyubiquitination. The polypeptide is Ubiquitin carboxyl-terminal hydrolase 22 (Usp22) (Mus musculus (Mouse)).